Consider the following 219-residue polypeptide: Ribose-5-phosphate isomerase A (219 aa).

Substrate contacts are provided by residues 28–31 (TGST), 81–84 (DGAD), and 94–97 (KGGG). The active-site Proton acceptor is E103. K121 serves as a coordination point for substrate.

It belongs to the ribose 5-phosphate isomerase family. As to quaternary structure, homodimer.

The catalysed reaction is aldehydo-D-ribose 5-phosphate = D-ribulose 5-phosphate. It functions in the pathway carbohydrate degradation; pentose phosphate pathway; D-ribose 5-phosphate from D-ribulose 5-phosphate (non-oxidative stage): step 1/1. Its function is as follows. Catalyzes the reversible conversion of ribose-5-phosphate to ribulose 5-phosphate. In Shewanella sp. (strain ANA-3), this protein is Ribose-5-phosphate isomerase A.